The primary structure comprises 342 residues: Ferredoxin--NADP reductase (342 aa).

FAD is bound by residues Cys17, Asp36, Gln44, Tyr49, Val89, Phe124, Asp289, and Thr330.

The protein belongs to the ferredoxin--NADP reductase type 2 family. As to quaternary structure, homodimer. Requires FAD as cofactor.

It carries out the reaction 2 reduced [2Fe-2S]-[ferredoxin] + NADP(+) + H(+) = 2 oxidized [2Fe-2S]-[ferredoxin] + NADPH. The polypeptide is Ferredoxin--NADP reductase (Bradyrhizobium sp. (strain ORS 278)).